Reading from the N-terminus, the 365-residue chain is DNA polymerase IV (365 aa).

The 182-residue stretch at 7 to 188 folds into the UmuC domain; sequence IIHIDMDAFY…LPVNKFFGVG (182 aa). D11 and D106 together coordinate Mg(2+). E107 is an active-site residue.

This sequence belongs to the DNA polymerase type-Y family. Monomer. Mg(2+) serves as cofactor.

The protein localises to the cytoplasm. It carries out the reaction DNA(n) + a 2'-deoxyribonucleoside 5'-triphosphate = DNA(n+1) + diphosphate. In terms of biological role, poorly processive, error-prone DNA polymerase involved in untargeted mutagenesis. Copies undamaged DNA at stalled replication forks, which arise in vivo from mismatched or misaligned primer ends. These misaligned primers can be extended by PolIV. Exhibits no 3'-5' exonuclease (proofreading) activity. May be involved in translesional synthesis, in conjunction with the beta clamp from PolIII. The chain is DNA polymerase IV from Clostridioides difficile (strain 630) (Peptoclostridium difficile).